A 572-amino-acid chain; its full sequence is Hemagglutinin-neuraminidase (572 aa).

Over 1-31 (MEYWKHTNHGKDAGNELETSMATHGNKITNK) the chain is Intravirion. The chain crosses the membrane as a helical span at residues 32 to 52 (ITYILWTIILVLLSIVFIIVL). The Virion surface segment spans residues 53–572 (INSIKSEKAH…FKTEIPKSCS (520 aa)). Cystine bridges form between Cys190/Cys214 and Cys256/Cys269. The tract at residues 252–257 (NRKSCS) is involved in neuraminidase activity. 2 N-linked (GlcNAc...) asparagine; by host glycosylation sites follow: Asn308 and Asn351. Cystine bridges form between Cys355/Cys469 and Cys463/Cys473. N-linked (GlcNAc...) asparagine; by host glycosylation is present at Asn523. A disulfide bridge links Cys535 with Cys544.

This sequence belongs to the paramyxoviruses hemagglutinin-neuraminidase family. In terms of assembly, homotetramer; composed of disulfide-linked homodimers. Interacts with F protein trimer.

The protein localises to the virion membrane. It is found in the host cell membrane. The catalysed reaction is Hydrolysis of alpha-(2-&gt;3)-, alpha-(2-&gt;6)-, alpha-(2-&gt;8)- glycosidic linkages of terminal sialic acid residues in oligosaccharides, glycoproteins, glycolipids, colominic acid and synthetic substrates.. In terms of biological role, attaches the virus to sialic acid-containing cell receptors and thereby initiating infection. Binding of HN protein to the receptor induces a conformational change that allows the F protein to trigger virion/cell membranes fusion. Functionally, neuraminidase activity ensures the efficient spread of the virus by dissociating the mature virions from the neuraminic acid containing glycoproteins. This is Hemagglutinin-neuraminidase (HN) from Human parainfluenza 3 virus (strain Wash/47885/57) (HPIV-3).